Consider the following 42-residue polypeptide: Omega-theraphotoxin-Asp3a (42 aa).

3 disulfides stabilise this stretch: cysteine 1/cysteine 16, cysteine 8/cysteine 21, and cysteine 15/cysteine 30.

The protein belongs to the neurotoxin 14 (magi-1) family. 08 (Ltx-4) subfamily. Expressed by the venom gland.

It is found in the secreted. Inhibits voltage-gated calcium channels (Cav) in rat cerebellar granule cells. This is Omega-theraphotoxin-Asp3a from Aphonopelma sp. (American tarantula).